A 297-amino-acid polypeptide reads, in one-letter code: Phosphoribosylaminoimidazole-succinocarboxamide synthase (297 aa).

This sequence belongs to the SAICAR synthetase family.

It catalyses the reaction 5-amino-1-(5-phospho-D-ribosyl)imidazole-4-carboxylate + L-aspartate + ATP = (2S)-2-[5-amino-1-(5-phospho-beta-D-ribosyl)imidazole-4-carboxamido]succinate + ADP + phosphate + 2 H(+). It functions in the pathway purine metabolism; IMP biosynthesis via de novo pathway; 5-amino-1-(5-phospho-D-ribosyl)imidazole-4-carboxamide from 5-amino-1-(5-phospho-D-ribosyl)imidazole-4-carboxylate: step 1/2. The polypeptide is Phosphoribosylaminoimidazole-succinocarboxamide synthase (Methylobacillus flagellatus (strain ATCC 51484 / DSM 6875 / VKM B-1610 / KT)).